Here is a 117-residue protein sequence, read N- to C-terminus: MGFRVLVLVVMATTSALPFTFSEEPGRSPFRPALRSEEAQALRHGLTLLLARRADGQPPDMRQPEMRRPEMRRPEVRQPEFAETPVGQKRGGLGRCIYNCMNSGGGLSFIQCKTMCY.

The N-terminal stretch at 1–22 is a signal peptide; sequence MGFRVLVLVVMATTSALPFTFS. Residues 23 to 90 constitute a propeptide that is removed on maturation; the sequence is EEPGRSPFRP…FAETPVGQKR (68 aa). The segment at 53-86 is disordered; that stretch reads RADGQPPDMRQPEMRRPEMRRPEVRQPEFAETPV. A compositionally biased stretch (basic and acidic residues) spans 62 to 80; sequence RQPEMRRPEMRRPEVRQPE. 2 disulfides stabilise this stretch: Cys-96/Cys-116 and Cys-100/Cys-112.

It belongs to the conotoxin R superfamily. In terms of tissue distribution, expressed by the venom duct.

It localises to the secreted. This is Conotoxin vil14a from Conus villepinii (Villepin's cone).